The primary structure comprises 117 residues: Prefoldin subunit beta (117 aa).

This sequence belongs to the prefoldin subunit beta family. Heterohexamer of two alpha and four beta subunits.

The protein localises to the cytoplasm. Molecular chaperone capable of stabilizing a range of proteins. Seems to fulfill an ATP-independent, HSP70-like function in archaeal de novo protein folding. This is Prefoldin subunit beta (pfdB) from Pyrococcus abyssi (strain GE5 / Orsay).